We begin with the raw amino-acid sequence, 284 residues long: tRNA-splicing endonuclease (284 aa).

Residues Y222, H229, and K257 contribute to the active site.

The protein belongs to the tRNA-intron endonuclease family. Archaeal long subfamily. Homodimer.

It carries out the reaction pretRNA = a 3'-half-tRNA molecule with a 5'-OH end + a 5'-half-tRNA molecule with a 2',3'-cyclic phosphate end + an intron with a 2',3'-cyclic phosphate and a 5'-hydroxyl terminus.. Endonuclease that removes tRNA introns. Cleaves pre-tRNA at the 5'- and 3'-splice sites to release the intron. The products are an intron and two tRNA half-molecules bearing 2',3' cyclic phosphate and 5'-OH termini. Recognizes a pseudosymmetric substrate in which 2 bulged loops of 3 bases are separated by a stem of 4 bp. This is tRNA-splicing endonuclease from Picrophilus torridus (strain ATCC 700027 / DSM 9790 / JCM 10055 / NBRC 100828 / KAW 2/3).